A 599-amino-acid polypeptide reads, in one-letter code: mRNA export factor MEX67 (599 aa).

Ser-2 is subject to N-acetylserine. LRR repeat units follow at residues 163 to 184 and 189 to 210; these read IVES…STLA and NLKN…EVWK. Positions 224 to 262 constitute an LRRCT domain; sequence NPITTDKLYRTEMLRLFPKLVVLDNVIVRDEQKLQTVYS. Residues 280–467 enclose the NTF2 domain; the sequence is SSTDFATNFL…VIIASDLLTV (188 aa). Residues 408–439 form a disordered region; that stretch reads KPELESNKKTGKNNYQKNRRYNHGYNSTSNNK. The 54-residue stretch at 546 to 599 folds into the TAP-C domain; the sequence is PVQLELLNKLHLETKLNAEYTFMLAEQSNWNYEVAIKGFQSSMNGIPREAFVQF.

It belongs to the NXF family. Interacts with nucleoporin complex NUP84 and MTR2. Interacts with MIP6.

The protein localises to the nucleus. Its subcellular location is the cytoplasm. Involved in the export of mRNA from the nucleus to the cytoplasm. This chain is mRNA export factor MEX67 (MEX67), found in Saccharomyces cerevisiae (strain ATCC 204508 / S288c) (Baker's yeast).